The following is a 627-amino-acid chain: Phosphomethylpyrimidine synthase (627 aa).

The segment at 1–21 (MSVQSNKNLSESAQVDQQSIQ) is disordered. Substrate is bound by residues N231, M260, Y289, H325, 345-347 (SRG), 386-389 (DGLR), and E425. Residue H429 coordinates Zn(2+). Y452 is a substrate binding site. Zn(2+) is bound at residue H493. The [4Fe-4S] cluster site is built by C573, C576, and C581.

Belongs to the ThiC family. In terms of assembly, homodimer. [4Fe-4S] cluster serves as cofactor.

The enzyme catalyses 5-amino-1-(5-phospho-beta-D-ribosyl)imidazole + S-adenosyl-L-methionine = 4-amino-2-methyl-5-(phosphooxymethyl)pyrimidine + CO + 5'-deoxyadenosine + formate + L-methionine + 3 H(+). The protein operates within cofactor biosynthesis; thiamine diphosphate biosynthesis. Functionally, catalyzes the synthesis of the hydroxymethylpyrimidine phosphate (HMP-P) moiety of thiamine from aminoimidazole ribotide (AIR) in a radical S-adenosyl-L-methionine (SAM)-dependent reaction. This is Phosphomethylpyrimidine synthase from Stutzerimonas stutzeri (strain A1501) (Pseudomonas stutzeri).